The sequence spans 360 residues: GDSL esterase/lipase At1g58430 (360 aa).

The signal sequence occupies residues Met1–Ala23. N-linked (GlcNAc...) asparagine glycosylation occurs at Asn22. Ser42 (nucleophile) is an active-site residue. 2 N-linked (GlcNAc...) asparagine glycosylation sites follow: Asn104 and Asn326. Active-site residues include Asp334 and His337.

Belongs to the 'GDSL' lipolytic enzyme family.

Its subcellular location is the secreted. This is GDSL esterase/lipase At1g58430 from Arabidopsis thaliana (Mouse-ear cress).